Consider the following 835-residue polypeptide: U-box domain-containing protein 35 (835 aa).

Disordered regions lie at residues 1–22, 177–303, and 410–457; these read MSRS…SRTV, VRPS…SSNR, and EKEK…LEGT. Residues 10–19 are compositionally biased toward pro residues; that stretch reads LPPPPPPPPS. Low complexity predominate over residues 195–218; the sequence is RTNSSSGSSGPTSDSSDVMSSAHD. Residues 269 to 282 show a composition bias toward polar residues; the sequence is SSINRSSTDTTSRW. Basic and acidic residues-rich tracts occupy residues 285–295 and 410–455; these read RRRDYEERKEA and EKEK…EKLE. Residues 340-459 are a coiled coil; sequence QSYTDNQVNL…EKEKLEGTLG (120 aa). The region spanning 480 to 745 is the Protein kinase domain; sequence FSEELKIGMG…DLKDQILPAL (266 aa). ATP contacts are provided by residues 486–494 and Lys507; that span reads IGMGAYGAV. The Proton acceptor role is filled by Asp602. In terms of domain architecture, U-box spans 765–835; sequence QPPTHFICPL…TAIMEWRSTR (71 aa).

The protein belongs to the protein kinase superfamily. Ser/Thr protein kinase family.

The catalysed reaction is L-seryl-[protein] + ATP = O-phospho-L-seryl-[protein] + ADP + H(+). It carries out the reaction L-threonyl-[protein] + ATP = O-phospho-L-threonyl-[protein] + ADP + H(+). The enzyme catalyses S-ubiquitinyl-[E2 ubiquitin-conjugating enzyme]-L-cysteine + [acceptor protein]-L-lysine = [E2 ubiquitin-conjugating enzyme]-L-cysteine + N(6)-ubiquitinyl-[acceptor protein]-L-lysine.. It functions in the pathway protein modification; protein ubiquitination. Functionally, functions as an E3 ubiquitin ligase. This chain is U-box domain-containing protein 35 (PUB35), found in Arabidopsis thaliana (Mouse-ear cress).